We begin with the raw amino-acid sequence, 243 residues long: Linker for activation of T-cells family member 2 (243 aa).

The Extracellular portion of the chain corresponds to 1–5 (MSSGT). A helical; Signal-anchor for type III membrane protein transmembrane segment spans residues 6 to 26 (ELLWPGAALLVLLGVAASLCV). 2 S-palmitoyl cysteine lipidation sites follow: cysteine 25 and cysteine 28. Residues 27 to 243 (RCSRPGAKRS…VNGEVAATEA (217 aa)) lie on the Cytoplasmic side of the membrane. Serine 44 carries the post-translational modification Phosphoserine. Tyrosine 58 is modified (phosphotyrosine). A phosphoserine mark is found at serine 59 and serine 92. Phosphotyrosine occurs at positions 136, 193, and 233. The interval 174–243 (PTSGLCPSAS…VNGEVAATEA (70 aa)) is disordered.

In terms of assembly, when phosphorylated, interacts with GRB2. May also interact with SOS1, GAB1 and CBL. In terms of processing, phosphorylated on tyrosines following cross-linking of BCR in B-cells, FCGR1 in myeloid cells, or FCER1 in mast cells; which induces the recruitment of GRB2. Post-translationally, may be polyubiquitinated. In terms of tissue distribution, highly expressed in spleen, peripheral blood lymphocytes, and germinal centers of lymph nodes. Also expressed in placenta, lung, pancreas and small intestine. Present in B-cells, NK cells and monocytes. Absent from T-cells (at protein level).

It is found in the cell membrane. Its function is as follows. Involved in FCER1 (high affinity immunoglobulin epsilon receptor)-mediated signaling in mast cells. May also be involved in BCR (B-cell antigen receptor)-mediated signaling in B-cells and FCGR1 (high affinity immunoglobulin gamma Fc receptor I)-mediated signaling in myeloid cells. Couples activation of these receptors and their associated kinases with distal intracellular events through the recruitment of GRB2. The protein is Linker for activation of T-cells family member 2 (LAT2) of Homo sapiens (Human).